Reading from the N-terminus, the 239-residue chain is Metallo-beta-lactamase IND-1 (239 aa).

Residues 1-20 (MKKSIRFFIVSILLSPFASA) form the signal peptide. Residues histidine 96, histidine 98, aspartate 100, histidine 159, and cysteine 178 each coordinate Zn(2+). Lysine 181 serves as a coordination point for a beta-lactam. Histidine 220 contributes to the Zn(2+) binding site.

The protein belongs to the metallo-beta-lactamase superfamily. Class-B beta-lactamase family. Monomer. The cofactor is Zn(2+).

The protein localises to the periplasm. It carries out the reaction a beta-lactam + H2O = a substituted beta-amino acid. Inhibited by chelating agents such as EDTA. Not susceptible to inactivation by the beta-lactamase-blocking agent clavulanic acid. Its function is as follows. Class B beta-lactamase which confers resistance to the beta-lactam antibiotics, including penicillins, cephalosporins and carbapenems. Acts via hydrolysis of the beta-lactam ring. Has penicillin-, cephalosporin- and carbapenem-hydrolyzing activities. In Chryseobacterium indologenes (Flavobacterium indologenes), this protein is Metallo-beta-lactamase IND-1.